The following is a 484-amino-acid chain: tRNA sulfurtransferase (484 aa).

Positions 63–167 constitute a THUMP domain; it reads QAFGERLACI…GDKLYMVTKR (105 aa). ATP is bound by residues 185-186, lysine 267, glycine 289, and glutamine 298; that span reads LI. Cysteine 346 and cysteine 458 form a disulfide bridge. In terms of domain architecture, Rhodanese spans 406-484; that stretch reads IDTNEVVIDI…GYHNVKVYRP (79 aa). Residue cysteine 458 is the Cysteine persulfide intermediate of the active site.

This sequence belongs to the ThiI family.

It localises to the cytoplasm. It catalyses the reaction [ThiI sulfur-carrier protein]-S-sulfanyl-L-cysteine + a uridine in tRNA + 2 reduced [2Fe-2S]-[ferredoxin] + ATP + H(+) = [ThiI sulfur-carrier protein]-L-cysteine + a 4-thiouridine in tRNA + 2 oxidized [2Fe-2S]-[ferredoxin] + AMP + diphosphate. The catalysed reaction is [ThiS sulfur-carrier protein]-C-terminal Gly-Gly-AMP + S-sulfanyl-L-cysteinyl-[cysteine desulfurase] + AH2 = [ThiS sulfur-carrier protein]-C-terminal-Gly-aminoethanethioate + L-cysteinyl-[cysteine desulfurase] + A + AMP + 2 H(+). The protein operates within cofactor biosynthesis; thiamine diphosphate biosynthesis. In terms of biological role, catalyzes the ATP-dependent transfer of a sulfur to tRNA to produce 4-thiouridine in position 8 of tRNAs, which functions as a near-UV photosensor. Also catalyzes the transfer of sulfur to the sulfur carrier protein ThiS, forming ThiS-thiocarboxylate. This is a step in the synthesis of thiazole, in the thiamine biosynthesis pathway. The sulfur is donated as persulfide by IscS. This Shewanella sp. (strain MR-7) protein is tRNA sulfurtransferase.